The sequence spans 419 residues: Transcription termination factor Rho (419 aa).

A Rho RNA-BD domain is found at 48 to 123 (DIFGDGVLEI…LKVNEVNFDK (76 aa)). 3 RNA-binding regions span residues 61–66 (GFGFLR), 78–80 (DIY), and 108–110 (ERY). ATP-binding positions include 169–174 (GRGQRG), 181–186 (KAGKTM), and arginine 212. The segment at 284–288 (VLTGG) is RNA-binding 2.

Belongs to the Rho family. In terms of assembly, homohexamer. The homohexamer assembles into an open ring structure.

Facilitates transcription termination by a mechanism that involves Rho binding to the nascent RNA, activation of Rho's RNA-dependent ATPase activity, and release of the mRNA from the DNA template. The polypeptide is Transcription termination factor Rho (Escherichia coli O157:H7).